A 45-amino-acid chain; its full sequence is uncharacterized protein (45 aa).

The interval 18–45 (RRGRIGVQPSPERRSEVVGPFPLARSLS) is disordered.

This is an uncharacterized protein from Homo sapiens (Human).